The primary structure comprises 205 residues: Probable molybdenum cofactor guanylyltransferase (205 aa).

GTP contacts are provided by residues Leu10–Gly12, Lys22, Asp69, and Asp100. Mg(2+) is bound at residue Asp100.

Belongs to the MobA family. Mg(2+) is required as a cofactor.

It is found in the cytoplasm. The catalysed reaction is Mo-molybdopterin + GTP + H(+) = Mo-molybdopterin guanine dinucleotide + diphosphate. Transfers a GMP moiety from GTP to Mo-molybdopterin (Mo-MPT) cofactor (Moco or molybdenum cofactor) to form Mo-molybdopterin guanine dinucleotide (Mo-MGD) cofactor. In Natranaerobius thermophilus (strain ATCC BAA-1301 / DSM 18059 / JW/NM-WN-LF), this protein is Probable molybdenum cofactor guanylyltransferase.